The sequence spans 878 residues: Splicing factor 3B subunit 2 (878 aa).

Basic and acidic residues predominate over residues Met1 to Lys10. 2 disordered regions span residues Met1–Gly25 and Arg67–Gly136. Lys10 is covalently cross-linked (Glycyl lysine isopeptide (Lys-Gly) (interchain with G-Cter in SUMO2)). An SAP domain is found at Tyr24–Thr58. 2 stretches are compositionally biased toward pro residues: residues Pro91–Gly114 and Ala122–Leu133. A coiled-coil region spans residues Ala140–Gln177. Disordered stretches follow at residues Gly183–Thr356 and Lys383–Lys436. The segment covering Pro201 to Pro221 has biased composition (low complexity). Omega-N-methylarginine occurs at positions 205, 228, and 230. Positions Ala224–Gly237 are enriched in pro residues. Lys258 bears the N6-acetyllysine mark. A compositionally biased stretch (basic and acidic residues) spans Leu260–Glu269. Lys263 participates in a covalent cross-link: Glycyl lysine isopeptide (Lys-Gly) (interchain with G-Cter in SUMO2). Residue Ser272 is modified to Phosphoserine. Thr281 carries the post-translational modification Phosphothreonine. Phosphoserine is present on residues Ser290 and Ser292. Position 294 is a phosphothreonine (Thr294). A Phosphoserine modification is found at Ser300. Residues Glu305–Arg321 show a composition bias toward basic residues. Positions Ser330–Gly342 are enriched in basic and acidic residues. Ser343 is subject to Phosphoserine. Glycyl lysine isopeptide (Lys-Gly) (interchain with G-Cter in SUMO2) cross-links involve residues Lys383 and Lys395. 2 stretches are compositionally biased toward basic and acidic residues: residues Lys383 to Glu397 and Lys405 to Ser414. Residues Lys384–Lys533 are required for interaction with PRMT9. A phosphoserine mark is found at Ser414, Ser418, and Ser419. Residue Lys475 forms a Glycyl lysine isopeptide (Lys-Gly) (interchain with G-Cter in SUMO2) linkage. Arg491 and Arg498 each carry omega-N-methylarginine. Position 491 is a symmetric dimethylarginine (Arg491). Lys526 is covalently cross-linked (Glycyl lysine isopeptide (Lys-Gly) (interchain with G-Cter in SUMO2)). Residues Ala674 to Gly740 are disordered. Over residues Glu695–Pro715 the composition is skewed to acidic residues. Residue Lys753 forms a Glycyl lysine isopeptide (Lys-Gly) (interchain with G-Cter in SUMO2) linkage. Thr763 bears the Phosphothreonine mark. Residues Lys773, Lys826, and Lys840 each participate in a glycyl lysine isopeptide (Lys-Gly) (interchain with G-Cter in SUMO2) cross-link. Residues Tyr827–Ala852 are compositionally biased toward basic and acidic residues. The interval Tyr827–Phe878 is disordered. Ser844 carries the post-translational modification Phosphoserine.

Component of the 17S U2 SnRNP complex, a ribonucleoprotein complex that contains small nuclear RNA (snRNA) U2 and a number of specific proteins. Part of the SF3B subcomplex of the 17S U2 SnRNP complex. SF3B associates with the splicing subcomplex SF3A and a 12S RNA unit to form the U2 small nuclear ribonucleoproteins complex (U2 snRNP). Within the SF3B complex, interacts directly with SF3B4. Found in a complex with PRMT9, SF3B2 and SF3B4. Interacts (Arg-491-methylated form) with SMN1 (via Tudor domain). Interacts with RBM7. Interacts with ERCC6. Component of the minor spliceosome. Within this complex, interacts with SCNM1 and CRIPT. Methylation at Arg-491 by PRMT9 is required for the interaction with SMN1.

It localises to the nucleus. Its subcellular location is the nucleus speckle. Its function is as follows. Component of the 17S U2 SnRNP complex of the spliceosome, a large ribonucleoprotein complex that removes introns from transcribed pre-mRNAs. The 17S U2 SnRNP complex (1) directly participates in early spliceosome assembly and (2) mediates recognition of the intron branch site during pre-mRNA splicing by promoting the selection of the pre-mRNA branch-site adenosine, the nucleophile for the first step of splicing. Within the 17S U2 SnRNP complex, SF3B2 is part of the SF3B subcomplex, which is required for 'A' complex assembly formed by the stable binding of U2 snRNP to the branchpoint sequence in pre-mRNA. Sequence independent binding of SF3A and SF3B subcomplexes upstream of the branch site is essential, it may anchor U2 snRNP to the pre-mRNA. May also be involved in the assembly of the 'E' complex. Also acts as a component of the minor spliceosome, which is involved in the splicing of U12-type introns in pre-mRNAs. This is Splicing factor 3B subunit 2 from Mus musculus (Mouse).